Consider the following 237-residue polypeptide: MRPSKRAADAMRDVTLERAVARYAEGSCLVTFGNTRVLCTASLEERGPPWLRGSGKGWVTAEYAMLPRATHERTRREVNSGKPSGRTQEIQRLIGRSLRAVTNLPALGERQITVDCDVIQADGGTRTASITGAWVALHDCFAWMRARSIISVDPLKDHVAAVSCGIYKGQPVLDLDYAEDSAAETDANFVVTGKGGIVEVQGTAEMEPFTDEQFLELLRLAKGGVAGLVELQRKAIA.

Phosphate is bound by residues arginine 86 and 124 to 126; that span reads GTR.

This sequence belongs to the RNase PH family. In terms of assembly, homohexameric ring arranged as a trimer of dimers.

The enzyme catalyses tRNA(n+1) + phosphate = tRNA(n) + a ribonucleoside 5'-diphosphate. Phosphorolytic 3'-5' exoribonuclease that plays an important role in tRNA 3'-end maturation. Removes nucleotide residues following the 3'-CCA terminus of tRNAs; can also add nucleotides to the ends of RNA molecules by using nucleoside diphosphates as substrates, but this may not be physiologically important. Probably plays a role in initiation of 16S rRNA degradation (leading to ribosome degradation) during starvation. This chain is Ribonuclease PH, found in Methylorubrum extorquens (strain PA1) (Methylobacterium extorquens).